Reading from the N-terminus, the 396-residue chain is NADH-quinone oxidoreductase subunit D (396 aa).

Belongs to the complex I 49 kDa subunit family. As to quaternary structure, NDH-1 is composed of 14 different subunits. Subunits NuoB, C, D, E, F, and G constitute the peripheral sector of the complex.

It localises to the cell inner membrane. The enzyme catalyses a quinone + NADH + 5 H(+)(in) = a quinol + NAD(+) + 4 H(+)(out). Its function is as follows. NDH-1 shuttles electrons from NADH, via FMN and iron-sulfur (Fe-S) centers, to quinones in the respiratory chain. The immediate electron acceptor for the enzyme in this species is believed to be ubiquinone. Couples the redox reaction to proton translocation (for every two electrons transferred, four hydrogen ions are translocated across the cytoplasmic membrane), and thus conserves the redox energy in a proton gradient. The protein is NADH-quinone oxidoreductase subunit D of Orientia tsutsugamushi (strain Boryong) (Rickettsia tsutsugamushi).